The primary structure comprises 981 residues: Ubiquitin carboxyl-terminal hydrolase 15 (981 aa).

Residue Ala2 is modified to N-acetylalanine. Positions 2-223 (AEGGAADLDT…KNEDGTWPRG (222 aa)) are mediates interaction with SART3. Positions 7–118 (ADLDTQRSDI…GQEPIARKVV (112 aa)) constitute a DUSP domain. The tract at residues 216-237 (EDGTWPRGPSTPKSPGASNFST) is disordered. Thr226 carries the phosphothreonine modification. A compositionally biased stretch (polar residues) spans 226–237 (TPKSPGASNFST). A phosphoserine mark is found at Ser229 and Ser242. The 645-residue stretch at 289 to 933 (CGLSNLGNTC…AAYVLFYQRQ (645 aa)) folds into the USP domain. Catalysis depends on Cys298, which acts as the Nucleophile. Thr602 carries the post-translational modification Phosphothreonine. Positions 629-694 (GSLHCCKDQN…GGDNDSENGL (66 aa)) are disordered. A compositionally biased stretch (acidic residues) spans 656 to 673 (METDEPDDESSQDQELPS). The active-site Proton acceptor is the His891. The tract at residues 952–981 (SAATGIPLESDEDSNDNDNDIENENCMHTN) is disordered. Positions 960-974 (ESDEDSNDNDNDIEN) are enriched in acidic residues. Residues Ser961 and Ser965 each carry the phosphoserine modification.

Belongs to the peptidase C19 family. In terms of assembly, a homodimer structure has been reported; however it is unclear whether the protein form a homodimer in vivo. Identified in a complex with the COP9 signalosome complex (CSN). Interacts with SMAD1, SMAD2 and SMAD3; the interaction is direct. Forms a complex with SMURF2 and SMAD7. Interacts with TGFBR1. Interacts with SART3; the interaction is direct. May interact with RNF20 and RNF40. May interact with PRKN. Interacts with INCA1. (Microbial infection) Interacts with human papillomavirus type 16 protein E6. Post-translationally, phosphorylated. Phosphorylation protects against ubiquitination and subsequent degradation by the proteasome. Ubiquitinated, leading to degradation by the proteasome. In terms of tissue distribution, expressed in skeletal muscle, kidney, heart, placenta, liver, thymus, lung, and ovary, with little or no expression in other tissues.

The protein resides in the cytoplasm. It localises to the nucleus. It is found in the mitochondrion. The enzyme catalyses Thiol-dependent hydrolysis of ester, thioester, amide, peptide and isopeptide bonds formed by the C-terminal Gly of ubiquitin (a 76-residue protein attached to proteins as an intracellular targeting signal).. In terms of biological role, hydrolase that removes conjugated ubiquitin from target proteins and regulates various pathways such as the TGF-beta receptor signaling, NF-kappa-B and RNF41/NRDP1-PRKN pathways. Acts as a key regulator of TGF-beta receptor signaling pathway, but the precise mechanism is still unclear: according to a report, acts by promoting deubiquitination of monoubiquitinated R-SMADs (SMAD1, SMAD2 and/or SMAD3), thereby alleviating inhibition of R-SMADs and promoting activation of TGF-beta target genes. According to another reports, regulates the TGF-beta receptor signaling pathway by mediating deubiquitination and stabilization of TGFBR1, leading to an enhanced TGF-beta signal. Able to mediate deubiquitination of monoubiquitinated substrates, 'Lys-27'-, 'Lys-48'- and 'Lys-63'-linked polyubiquitin chains. May also regulate gene expression and/or DNA repair through the deubiquitination of histone H2B. Acts as an inhibitor of mitophagy by counteracting the action of parkin (PRKN): hydrolyzes cleavage of 'Lys-48'- and 'Lys-63'-linked polyubiquitin chains attached by parkin on target proteins such as MFN2, thereby reducing parkin's ability to drive mitophagy. Acts as an associated component of COP9 signalosome complex (CSN) and regulates different pathways via this association: regulates NF-kappa-B by mediating deubiquitination of NFKBIA and deubiquitinates substrates bound to VCP. Involved in endosome organization by mediating deubiquitination of SQSTM1: ubiquitinated SQSTM1 forms a molecular bridge that restrains cognate vesicles in the perinuclear region and its deubiquitination releases target vesicles for fast transport into the cell periphery. Acts as a negative regulator of antifungal immunity by mediating 'Lys-27'-linked deubiquitination of CARD9, thereby inactivating CARD9. (Microbial infection) Protects APC and human papillomavirus type 16 protein E6 against degradation via the ubiquitin proteasome pathway. In Homo sapiens (Human), this protein is Ubiquitin carboxyl-terminal hydrolase 15.